Consider the following 326-residue polypeptide: Tagatose 1,6-diphosphate aldolase (326 aa).

It belongs to the aldolase LacD family.

The enzyme catalyses D-tagatofuranose 1,6-bisphosphate = D-glyceraldehyde 3-phosphate + dihydroxyacetone phosphate. The protein operates within carbohydrate metabolism; D-tagatose 6-phosphate degradation; D-glyceraldehyde 3-phosphate and glycerone phosphate from D-tagatose 6-phosphate: step 2/2. This Staphylococcus aureus (strain bovine RF122 / ET3-1) protein is Tagatose 1,6-diphosphate aldolase.